A 267-amino-acid chain; its full sequence is MEVKIKQVDEVKISRYIIKETMEDWYQFVESDVVIVGAGPSGLSAAYYLAKAGLKTLVFERRLSFGGGIGGGAMLFHKLIIEKPADEILREVNVRLKEVEEGVYVVDSAEFMAKLATAAIDAGAKIIHGVTVDDVIFRENPLRVAGVAVEWTATQMASLHVDPIFISAKAVVDATGHDAEVISVAARKIPELGIVIAGEKSAYSERAEELTVINTGKVAEGLYAAGMAVTEVKGLPRMGPIFGAMVLSGKAVAEEITKDLLKSEIRT.

Residues S41, 60 to 61, G68, V132, and 160 to 162 contribute to the NAD(+) site; these read ER and HVD. D162 and H177 together coordinate Fe cation. M227 is a binding site for NAD(+). R237 serves as a coordination point for glycine.

The protein belongs to the THI4 family. In terms of assembly, homooctamer; tetramer of dimers. Fe(2+) is required as a cofactor.

The enzyme catalyses hydrogen sulfide + glycine + NAD(+) = ADP-5-ethyl-4-methylthiazole-2-carboxylate + nicotinamide + 3 H2O + H(+). Its pathway is cofactor biosynthesis; thiamine diphosphate biosynthesis. Its function is as follows. Involved in the biosynthesis of the thiazole moiety of thiamine. Catalyzes the conversion of NAD and glycine to adenosine diphosphate 5-(2-hydroxyethyl)-4-methylthiazole-2-carboxylate (ADT), an adenylated thiazole intermediate, using free sulfide as a source of sulfur. The chain is Thiamine thiazole synthase from Saccharolobus islandicus (strain Y.N.15.51 / Yellowstone #2) (Sulfolobus islandicus).